Reading from the N-terminus, the 549-residue chain is Glucose-6-phosphate isomerase (549 aa).

Residue glutamate 355 is the Proton donor of the active site. Active-site residues include histidine 386 and lysine 514.

It belongs to the GPI family.

Its subcellular location is the cytoplasm. It catalyses the reaction alpha-D-glucose 6-phosphate = beta-D-fructose 6-phosphate. It functions in the pathway carbohydrate biosynthesis; gluconeogenesis. It participates in carbohydrate degradation; glycolysis; D-glyceraldehyde 3-phosphate and glycerone phosphate from D-glucose: step 2/4. Functionally, catalyzes the reversible isomerization of glucose-6-phosphate to fructose-6-phosphate. The polypeptide is Glucose-6-phosphate isomerase (Salmonella gallinarum (strain 287/91 / NCTC 13346)).